The chain runs to 226 residues: Urease accessory protein UreF (226 aa).

It belongs to the UreF family. As to quaternary structure, ureD, UreF and UreG form a complex that acts as a GTP-hydrolysis-dependent molecular chaperone, activating the urease apoprotein by helping to assemble the nickel containing metallocenter of UreC. The UreE protein probably delivers the nickel.

The protein localises to the cytoplasm. Functionally, required for maturation of urease via the functional incorporation of the urease nickel metallocenter. The protein is Urease accessory protein UreF of Paraburkholderia xenovorans (strain LB400).